We begin with the raw amino-acid sequence, 181 residues long: MAQTGNFKSPARMSSLGQGAAPASAGAVTGGKPREEGLKGVDFERRGFLQKIVGGVGAVVAVSTLYPVVRYIVPPAKKIKIVNELAVGPASDVPNGTGKIYQFNDDKVIVVNHGGSLTAVSAICTHLGCLVHWDEAADMIACPCHGAKYTQDGKIISGPQPLPLKQYKVKIEDGKIVVSIA.

The segment at 1–35 is disordered; it reads MAQTGNFKSPARMSSLGQGAAPASAGAVTGGKPRE. 2 helical membrane passes run 53-73 and 114-134; these read VGGV…RYIV and GGSL…VHWD. In terms of domain architecture, Rieske spans 85-178; the sequence is LAVGPASDVP…VKIEDGKIVV (94 aa). The [2Fe-2S] cluster site is built by cysteine 124, histidine 126, cysteine 142, and histidine 145. Cysteine 129 and cysteine 144 are joined by a disulfide.

It belongs to the Rieske iron-sulfur protein family. It depends on [2Fe-2S] cluster as a cofactor.

It is found in the cell inner membrane. The catalysed reaction is 2 oxidized [plastocyanin] + a plastoquinol + 2 H(+)(in) = 2 reduced [plastocyanin] + a plastoquinone + 4 H(+)(out). In terms of biological role, component of the green S-bacteria bc-complex which consists of the Rieske protein and cytochrome b subunit and which appears to lack a cytochrome c1-equivalent. This complex has a comparatively low redox potential. The protein is Cytochrome b6-f complex iron-sulfur subunit (petC) of Chlorobaculum tepidum (strain ATCC 49652 / DSM 12025 / NBRC 103806 / TLS) (Chlorobium tepidum).